A 955-amino-acid polypeptide reads, in one-letter code: Calsyntenin-2 (955 aa).

An N-terminal signal peptide occupies residues 1–20; it reads MLPGRLCWVPLLLALGVGSG. At 21–831 the chain is on the extracellular side; the sequence is SGGGGDSRQR…SIQHSSVVPS (811 aa). Cadherin domains are found at residues 44–160 and 161–280; these read IETS…APTF and KEPA…MPLF. 2 N-linked (GlcNAc...) asparagine glycosylation sites follow: Asn-56 and Asn-98. Residues Asn-342, Asn-374, Asn-716, and Asn-729 are each glycosylated (N-linked (GlcNAc...) asparagine). Residues 832 to 852 form a helical membrane-spanning segment; it reads IATVVIIISVCMLVFVVAMGV. Topologically, residues 853 to 955 are cytoplasmic; it reads YRVRIAHQHF…LEWDDSTLPY (103 aa). A disordered region spans residues 887 to 955; it reads PMEKHEGPGH…LEWDDSTLPY (69 aa). Residues 888 to 898 are compositionally biased toward basic and acidic residues; that stretch reads MEKHEGPGHGE. Acidic residues-rich tracts occupy residues 899–913 and 920–929; these read DETE…EEEM and DDSEEEEEEE.

This sequence belongs to the calsyntenin family. Post-translationally, proteolytically processed under normal cellular conditions. A primary zeta-cleavage generates a large extracellular (soluble) N-terminal domain (sAlc) and a short C-terminal transmembrane fragment (CTF1). A secondary cleavage catalyzed by gamma-secretase within the transmembrane domain releases the beta-Alc-gamma chain in the extracellular milieu and produces an intracellular fragment (AlcICD). This processing is strongly suppressed in the tripartite complex formed with APBA2 and APP, which seems to prevent the association with PSEN1. In terms of tissue distribution, restricted to the brain.

It localises to the postsynaptic cell membrane. It is found in the endoplasmic reticulum membrane. Its subcellular location is the golgi apparatus membrane. The protein localises to the cell projection. The protein resides in the dendrite. Its function is as follows. Postsynaptic adhesion molecule that binds to presynaptic neurexins to mediate synapse formation, and which is involved in learning and memory. Promotes synapse development by acting as a cell adhesion molecule at the postsynaptic membrane, which associates with neurexin-alpha at the presynaptic membrane. The sequence is that of Calsyntenin-2 from Homo sapiens (Human).